The primary structure comprises 340 residues: Ferrochelatase (340 aa).

Histidine 218 and glutamate 298 together coordinate Fe cation.

It belongs to the ferrochelatase family.

It localises to the cytoplasm. It catalyses the reaction heme b + 2 H(+) = protoporphyrin IX + Fe(2+). It functions in the pathway porphyrin-containing compound metabolism; protoheme biosynthesis; protoheme from protoporphyrin-IX: step 1/1. Catalyzes the ferrous insertion into protoporphyrin IX. This is Ferrochelatase from Wolbachia sp. subsp. Brugia malayi (strain TRS).